The following is a 195-amino-acid chain: Transcriptional regulator GfcR (195 aa).

It belongs to the purine/pyrimidine phosphoribosyltransferase family. GfcR subfamily.

The sequence is that of Transcriptional regulator GfcR from Picrophilus torridus (strain ATCC 700027 / DSM 9790 / JCM 10055 / NBRC 100828 / KAW 2/3).